Here is a 66-residue protein sequence, read N- to C-terminus: Alpha-actitoxin-Ms11a-1 (66 aa).

The first 24 residues, 1 to 24 (MASKIFFVLAVFLVMSAVLPESFA), serve as a signal peptide directing secretion. Cystine bridges form between Cys-26/Cys-41, Cys-33/Cys-46, and Cys-40/Cys-61.

It is found in the secreted. The protein resides in the nematocyst. Its function is as follows. Alpha-toxins act on postsynaptic membranes, they bind to the nicotinic acetylcholine receptors (nAChR) and thus inhibit them. This toxin competes with alpha-bungarotoxin for binding to orthosteric sites on muscle-type T.carlifornicus (IC(50)=408 nM) and human alpha-7/CHRNA7 nAChRs (IC(50)=14.16 uM). The protein is Alpha-actitoxin-Ms11a-1 of Metridium senile (Brown sea anemone).